The chain runs to 359 residues: Mandelate racemase (359 aa).

Catalysis depends on lysine 166, which acts as the Proton acceptor; specific for S-mandelate. Mg(2+)-binding residues include aspartate 195, glutamate 221, and glutamate 247. Residue histidine 297 is the Proton acceptor; specific for R-mandelate of the active site. A substrate-binding site is contributed by glutamate 317.

Belongs to the mandelate racemase/muconate lactonizing enzyme family. As to quaternary structure, homooctamer. The cofactor is Mg(2+).

It catalyses the reaction (S)-mandelate = (R)-mandelate. It functions in the pathway aromatic compound metabolism; (R)-mandelate degradation; benzoate from (R)-mandelate: step 1/4. The polypeptide is Mandelate racemase (mdlA) (Pseudomonas putida (Arthrobacter siderocapsulatus)).